The chain runs to 310 residues: Acetylglutamate kinase (310 aa).

Substrate is bound by residues glycine 79–glycine 80, arginine 101, and asparagine 206.

The protein belongs to the acetylglutamate kinase family. ArgB subfamily.

The protein resides in the cytoplasm. It catalyses the reaction N-acetyl-L-glutamate + ATP = N-acetyl-L-glutamyl 5-phosphate + ADP. Its pathway is amino-acid biosynthesis; L-arginine biosynthesis; N(2)-acetyl-L-ornithine from L-glutamate: step 2/4. In terms of biological role, catalyzes the ATP-dependent phosphorylation of N-acetyl-L-glutamate. The sequence is that of Acetylglutamate kinase from Rhodospirillum rubrum (strain ATCC 11170 / ATH 1.1.1 / DSM 467 / LMG 4362 / NCIMB 8255 / S1).